Here is a 1207-residue protein sequence, read N- to C-terminus: DNA-directed RNA polymerase subunit beta' (1207 aa).

The Zn(2+) site is built by cysteine 60, cysteine 62, cysteine 75, and cysteine 78. Residues aspartate 450, aspartate 452, and aspartate 454 each contribute to the Mg(2+) site. The Zn(2+) site is built by cysteine 818, cysteine 892, cysteine 899, and cysteine 902.

This sequence belongs to the RNA polymerase beta' chain family. The RNAP catalytic core consists of 2 alpha, 1 beta, 1 beta' and 1 omega subunit. When a sigma factor is associated with the core the holoenzyme is formed, which can initiate transcription. Mg(2+) is required as a cofactor. Zn(2+) serves as cofactor.

The catalysed reaction is RNA(n) + a ribonucleoside 5'-triphosphate = RNA(n+1) + diphosphate. Its function is as follows. DNA-dependent RNA polymerase catalyzes the transcription of DNA into RNA using the four ribonucleoside triphosphates as substrates. The sequence is that of DNA-directed RNA polymerase subunit beta' from Lactococcus lactis subsp. lactis (strain IL1403) (Streptococcus lactis).